The primary structure comprises 405 residues: Phosphopentomutase (405 aa).

Mn(2+) is bound by residues D10, D305, H310, D346, H347, and H358.

It belongs to the phosphopentomutase family. The cofactor is Mn(2+).

It localises to the cytoplasm. It catalyses the reaction 2-deoxy-alpha-D-ribose 1-phosphate = 2-deoxy-D-ribose 5-phosphate. It carries out the reaction alpha-D-ribose 1-phosphate = D-ribose 5-phosphate. It participates in carbohydrate degradation; 2-deoxy-D-ribose 1-phosphate degradation; D-glyceraldehyde 3-phosphate and acetaldehyde from 2-deoxy-alpha-D-ribose 1-phosphate: step 1/2. Functionally, isomerase that catalyzes the conversion of deoxy-ribose 1-phosphate (dRib-1-P) and ribose 1-phosphate (Rib-1-P) to deoxy-ribose 5-phosphate (dRib-5-P) and ribose 5-phosphate (Rib-5-P), respectively. The sequence is that of Phosphopentomutase from Methylobacterium sp. (strain 4-46).